The following is a 476-amino-acid chain: Rifampicin monooxygenase (476 aa).

FAD is bound by residues Thr-12, Glu-31, Lys-32, Gln-98, Leu-122, and Thr-156. Rifampicin is bound by residues Arg-196 and Arg-213. Positions 277, 290, and 291 each coordinate FAD.

It belongs to the rifampicin monooxygenase family. The cofactor is FAD.

It catalyses the reaction rifampicin + NADPH + O2 = rifampicin para-naphthoquinone carboxamide + NADP(+) + H2O + H(+). The enzyme catalyses rifampicin + NADH + O2 = rifampicin para-naphthoquinone carboxamide + NAD(+) + H2O + H(+). It carries out the reaction rifamycin SV + NADPH + O2 = rifamycin SV para-naphthoquinone carboxamide + NADP(+) + H2O. The catalysed reaction is rifamycin SV + NADH + O2 = rifamycin SV para-naphthoquinone carboxamide + NAD(+) + H2O. Its function is as follows. Monooxygenase that can modify rifampicin, thereby inactivating its antibiotic activity. Inactivates a broad range of rifamycin antibiotics. The sequence is that of Rifampicin monooxygenase from Streptomyces venezuelae (strain ATCC 10712 / CBS 650.69 / DSM 40230 / JCM 4526 / NBRC 13096 / PD 04745).